The sequence spans 205 residues: Guanylate kinase (205 aa).

One can recognise a Guanylate kinase-like domain in the interval 7–185 (GNIFIISAAS…AEGDLLHIVN (179 aa)). Residue 14–21 (AASGTGKT) participates in ATP binding.

The protein belongs to the guanylate kinase family.

The protein localises to the cytoplasm. It catalyses the reaction GMP + ATP = GDP + ADP. Functionally, essential for recycling GMP and indirectly, cGMP. In Neisseria gonorrhoeae (strain ATCC 700825 / FA 1090), this protein is Guanylate kinase.